The following is a 347-amino-acid chain: Involucrin (347 aa).

Disordered regions lie at residues 1–43 (MSQQ…LPAP) and 56–347 (PLED…RRSL). The span at 27–36 (ADTQQEQVKQ) shows a compositional bias: polar residues. Low complexity-rich tracts occupy residues 70-114 (VPEQ…QQES) and 138-161 (DQQQQQESQVQELHVGHHQQQQES). 2 stretches are compositionally biased toward basic and acidic residues: residues 164 to 173 (QELHVDHHQQ) and 212 to 221 (QELHVDHHQQ). 2 stretches are compositionally biased toward low complexity: residues 222 to 241 (QQESQVQELHVDHQQQQQES) and 265 to 285 (DQQQQELQVQEVQQQQQQQQE). Residues 287 to 341 (QEDHQKAEHLEQEEAQREQQLKGQLEQEKKGVYQHLDQELTKRDEHLEKKGEHCW) show a composition bias toward basic and acidic residues.

Belongs to the involucrin family. In terms of assembly, directly or indirectly cross-linked to cornifelin (CNFN). Substrate of transglutaminase. Specific glutamines or lysines are cross-linked to keratins, desmoplakin and to inter involucrin molecules. As to expression, keratinocytes of epidermis and other stratified squamous epithelia.

The protein resides in the cytoplasm. Functionally, part of the insoluble cornified cell envelope (CE) of stratified squamous epithelia. The chain is Involucrin (IVL) from Sus scrofa (Pig).